Reading from the N-terminus, the 423-residue chain is D-tagatose-1,6-bisphosphate aldolase subunit GatZ (423 aa).

It belongs to the GatZ/KbaZ family. GatZ subfamily. As to quaternary structure, forms a complex with GatY.

Its pathway is carbohydrate metabolism; D-tagatose 6-phosphate degradation; D-glyceraldehyde 3-phosphate and glycerone phosphate from D-tagatose 6-phosphate: step 2/2. Its function is as follows. Component of the tagatose-1,6-bisphosphate aldolase GatYZ that is required for full activity and stability of the Y subunit. Could have a chaperone-like function for the proper and stable folding of GatY. When expressed alone, GatZ does not show any aldolase activity. Is involved in the catabolism of galactitol. This Salmonella gallinarum (strain 287/91 / NCTC 13346) protein is D-tagatose-1,6-bisphosphate aldolase subunit GatZ.